The primary structure comprises 232 residues: 5'-methylthioadenosine/S-adenosylhomocysteine nucleosidase (232 aa).

The active-site Proton acceptor is Glu-12. Substrate is bound by residues Gly-78, Ile-152, and 173–174 (ME). The Proton donor role is filled by Asp-197.

Belongs to the PNP/UDP phosphorylase family. MtnN subfamily. Homodimer.

The enzyme catalyses S-adenosyl-L-homocysteine + H2O = S-(5-deoxy-D-ribos-5-yl)-L-homocysteine + adenine. It carries out the reaction S-methyl-5'-thioadenosine + H2O = 5-(methylsulfanyl)-D-ribose + adenine. The catalysed reaction is 5'-deoxyadenosine + H2O = 5-deoxy-D-ribose + adenine. It functions in the pathway amino-acid biosynthesis; L-methionine biosynthesis via salvage pathway; S-methyl-5-thio-alpha-D-ribose 1-phosphate from S-methyl-5'-thioadenosine (hydrolase route): step 1/2. Functionally, catalyzes the irreversible cleavage of the glycosidic bond in both 5'-methylthioadenosine (MTA) and S-adenosylhomocysteine (SAH/AdoHcy) to adenine and the corresponding thioribose, 5'-methylthioribose and S-ribosylhomocysteine, respectively. Also cleaves 5'-deoxyadenosine, a toxic by-product of radical S-adenosylmethionine (SAM) enzymes, into 5-deoxyribose and adenine. Thus, is required for in vivo function of the radical SAM enzymes biotin synthase and lipoic acid synthase, that are inhibited by 5'-deoxyadenosine accumulation. This is 5'-methylthioadenosine/S-adenosylhomocysteine nucleosidase from Erwinia tasmaniensis (strain DSM 17950 / CFBP 7177 / CIP 109463 / NCPPB 4357 / Et1/99).